Here is a 547-residue protein sequence, read N- to C-terminus: Chaperonin GroEL (547 aa).

Residues 30–33 (TLGP), Lys-51, 87–91 (DGTTT), Gly-415, and Asp-495 each bind ATP.

This sequence belongs to the chaperonin (HSP60) family. Forms a cylinder of 14 subunits composed of two heptameric rings stacked back-to-back. Interacts with the co-chaperonin GroES.

The protein resides in the cytoplasm. It catalyses the reaction ATP + H2O + a folded polypeptide = ADP + phosphate + an unfolded polypeptide.. Together with its co-chaperonin GroES, plays an essential role in assisting protein folding. The GroEL-GroES system forms a nano-cage that allows encapsulation of the non-native substrate proteins and provides a physical environment optimized to promote and accelerate protein folding. The chain is Chaperonin GroEL from Pasteurella multocida (strain Pm70).